We begin with the raw amino-acid sequence, 387 residues long: Protoheme IX farnesyltransferase, mitochondrial (387 aa).

The next 8 membrane-spanning stretches (helical) occupy residues 95-115, 117-137, 183-203, 212-232, 242-262, 284-306, 311-330, and 345-365; these read LTVL…YPGL, FNTL…ANAF, FLVN…YMGI, IVNT…GWAA, PGGL…FNAF, ALNA…AYIS, GPWY…ARAW, and FFAS…CHMI.

It belongs to the UbiA prenyltransferase family.

Its subcellular location is the mitochondrion membrane. The enzyme catalyses heme b + (2E,6E)-farnesyl diphosphate + H2O = Fe(II)-heme o + diphosphate. Its function is as follows. Converts protoheme IX and farnesyl diphosphate to heme O. The protein is Protoheme IX farnesyltransferase, mitochondrial (cox10) of Schizosaccharomyces pombe (strain 972 / ATCC 24843) (Fission yeast).